The following is an 881-amino-acid chain: Valine--tRNA ligase (881 aa).

The short motif at Pro49 to His59 is the 'HIGH' region element. A 'KMSKS' region motif is present at residues Lys526–Ser530. Lys529 contacts ATP. The stretch at Leu810–Lys881 forms a coiled coil.

The protein belongs to the class-I aminoacyl-tRNA synthetase family. ValS type 1 subfamily. In terms of assembly, monomer.

The protein resides in the cytoplasm. The enzyme catalyses tRNA(Val) + L-valine + ATP = L-valyl-tRNA(Val) + AMP + diphosphate. Its function is as follows. Catalyzes the attachment of valine to tRNA(Val). As ValRS can inadvertently accommodate and process structurally similar amino acids such as threonine, to avoid such errors, it has a 'posttransfer' editing activity that hydrolyzes mischarged Thr-tRNA(Val) in a tRNA-dependent manner. The sequence is that of Valine--tRNA ligase from Bacillus anthracis.